A 187-amino-acid polypeptide reads, in one-letter code: Elongation factor P (187 aa).

Belongs to the elongation factor P family.

It localises to the cytoplasm. It participates in protein biosynthesis; polypeptide chain elongation. Involved in peptide bond synthesis. Stimulates efficient translation and peptide-bond synthesis on native or reconstituted 70S ribosomes in vitro. Probably functions indirectly by altering the affinity of the ribosome for aminoacyl-tRNA, thus increasing their reactivity as acceptors for peptidyl transferase. The polypeptide is Elongation factor P (Mycobacterium ulcerans (strain Agy99)).